Reading from the N-terminus, the 309-residue chain is tRNA dimethylallyltransferase (309 aa).

13–20 lines the ATP pocket; that stretch reads GPTGAGKT. Residue 15 to 20 participates in substrate binding; that stretch reads TGAGKT. 2 interaction with substrate tRNA regions span residues 38-41 and 162-166; these read DSRQ and QRVTR.

It belongs to the IPP transferase family. In terms of assembly, monomer. Mg(2+) is required as a cofactor.

It carries out the reaction adenosine(37) in tRNA + dimethylallyl diphosphate = N(6)-dimethylallyladenosine(37) in tRNA + diphosphate. Functionally, catalyzes the transfer of a dimethylallyl group onto the adenine at position 37 in tRNAs that read codons beginning with uridine, leading to the formation of N6-(dimethylallyl)adenosine (i(6)A). The sequence is that of tRNA dimethylallyltransferase from Nitratidesulfovibrio vulgaris (strain ATCC 29579 / DSM 644 / CCUG 34227 / NCIMB 8303 / VKM B-1760 / Hildenborough) (Desulfovibrio vulgaris).